We begin with the raw amino-acid sequence, 128 residues long: MRHRVKTKKLNRYASHRKALLNNLARSVFESESIITTTAKAKAVRPLVERIITKAKEANSTDLPERRVALNRDINKHFNDRKLVYKIVHEIAPRYENRNGGYTRILKIGYRKGDASELSILQLLPKEE.

This sequence belongs to the bacterial ribosomal protein bL17 family. In terms of assembly, part of the 50S ribosomal subunit. Contacts protein L32.

This chain is Large ribosomal subunit protein bL17, found in Petrotoga mobilis (strain DSM 10674 / SJ95).